Here is a 367-residue protein sequence, read N- to C-terminus: Polyenoic acids biosynthesis gene cluster protein Ba17b (367 aa).

The next 3 membrane-spanning stretches (helical) occupy residues 16 to 36 (LEVF…LRFY), 50 to 70 (WLII…IGAV), and 90 to 110 (LVAF…TEGL). Residue N133 is glycosylated (N-linked (GlcNAc...) asparagine). A run of 3 helical transmembrane segments spans residues 137-157 (LVLV…CTPF), 183-203 (FPNI…VWGL), and 211-231 (LVLV…GGDS). N245 is a glycosylation site (N-linked (GlcNAc...) asparagine). Residues 259 to 279 (LIIWTVCEPGVYLIAACLLVY) traverse the membrane as a helical segment.

It belongs to the SAT4 family.

Its subcellular location is the membrane. The protein operates within secondary metabolite biosynthesis. Its function is as follows. Part of the gene cluster that mediates the biosynthesis of (2Z,4E,6E,10E)-9-hydroxydodeca-2,4,6,10-tetraenoic acid (BAA), (2E,4E,6E,10E)-9-hydroxydodeca-2,4,6,10-tetraenoic acid (BAB), and (2Z,4E,6E)-octa-2,4,6-trienedioic acid (PBA). The highly reducing polyketide synthase Ba17a is sufficent to produce PBA and BAA. The still to be characterized protein Ba17b leads to an increased production of BAA as well as to the production of the new compound BAB. BAA does not possess insecticidal activity against G.mellonella larvae, however, both BAA and BAB increase the growth of Candida albicans and BAA can mitigate the fungicidal effects of fluconazole over C.albicans, suggesting that generalist pathogens such as M.anisopliae, can potentially manipulate the yeast microbiota found in arthropods (and anywhere else) by the activity of compounds as BAA and BAB. The protein is Polyenoic acids biosynthesis gene cluster protein Ba17b of Metarhizium anisopliae (Entomophthora anisopliae).